Here is a 789-residue protein sequence, read N- to C-terminus: Homocitrate dehydratase, mitochondrial (789 aa).

The N-terminal 14 residues, 1-14 (MLSSANRFYIKRHL), are a transit peptide targeting the mitochondrion. Substrate contacts are provided by residues Gln-96 and 189-191 (DSH). The [4Fe-4S] cluster site is built by Cys-385, Cys-448, and Cys-451. Residues Arg-476, Arg-481, Lys-610, and 672-673 (AR) contribute to the substrate site.

This sequence belongs to the aconitase/IPM isomerase family. [4Fe-4S] cluster serves as cofactor.

It localises to the mitochondrion. The catalysed reaction is (2R)-homocitrate = cis-homoaconitate + H2O. Its pathway is amino-acid biosynthesis; L-lysine biosynthesis via AAA pathway; L-alpha-aminoadipate from 2-oxoglutarate: step 2/5. Its function is as follows. Catalyzes the reversible dehydration of (R)-homocitrate to cis-homoaconitate, a step in the alpha-aminoadipate pathway for lysine biosynthesis. The protein is Homocitrate dehydratase, mitochondrial (ACO2) of Saccharomyces cerevisiae (strain ATCC 204508 / S288c) (Baker's yeast).